The sequence spans 1551 residues: Dual oxidase 1 (1551 aa).

Positions 1-21 (MGFCLALAWTLLVGAWTPLGA) are cleaved as a signal peptide. Over 22–596 (QNPISWEVQR…YFEGSGFGFG (575 aa)) the chain is Extracellular. Positions 26 to 593 (SWEVQRFDGW…VRDYFEGSGF (568 aa)) are peroxidase-like; mediates peroxidase activity. A glycan (N-linked (GlcNAc...) asparagine) is linked at asparagine 94. Residues 150 to 172 (RWDPETGRSPSNPRDPANQVTGW) form a disordered region. Asparagine 342, asparagine 354, asparagine 461, and asparagine 534 each carry an N-linked (GlcNAc...) asparagine glycan. A helical transmembrane segment spans residues 597–617 (VTIGTLCCFPLVSLLSAWIVA). Topologically, residues 618–1044 (RLRMRNFKRL…KRFIENYRRH (427 aa)) are cytoplasmic. EF-hand domains follow at residues 815 to 850 (PQDM…FMKG), 851 to 886 (SPEE…FIEI), and 895 to 930 (QLAE…HNSE). Residues aspartate 828, aspartate 830, asparagine 832, tyrosine 834, glutamate 839, aspartate 864, aspartate 866, asparagine 868, and glutamate 875 each coordinate Ca(2+). The tract at residues 956–1248 (YISQDMICPS…GSFALIQLPR (293 aa)) is interaction with TXNDC11. The chain crosses the membrane as a helical span at residues 1045–1065 (IGCVAVFYAIAGGLFLERAYY). At 1066 to 1080 (YAFAAHHTGITDTTR) the chain is on the extracellular side. Residues 1081–1101 (VGIILSRGTAASISFMFSYIL) form a helical membrane-spanning segment. The 183-residue stretch at 1087 to 1269 (RGTAASISFM…YGGDKLVSLS (183 aa)) folds into the Ferric oxidoreductase domain. Topologically, residues 1102-1148 (LTMCRNLITFLRETFLNRYVPFDAAVDFHRLIASTAIVLTVLHSVGH) are cytoplasmic. A helical transmembrane segment spans residues 1149–1171 (VVNVYLFSISPLSVLSCLFPGLF). Residues 1172–1188 (HDDGSELPQKYYWWFFQ) lie on the Extracellular side of the membrane. The chain crosses the membrane as a helical span at residues 1189 to 1209 (TVPGLTGVVLLLILAIMYVFA). Over 1210 to 1226 (SHHFRRRSFRGFWLTHH) the chain is Cytoplasmic. A helical membrane pass occupies residues 1227–1247 (LYILLYVLLIIHGSFALIQLP). Arginine 1248 is a topological domain (extracellular). A helical membrane pass occupies residues 1249–1269 (FHIFFLVPAIIYGGDKLVSLS). The region spanning 1270–1376 (RKKVEISVVK…DGPFGEGHQE (107 aa)) is the FAD-binding FR-type domain. The Cytoplasmic portion of the chain corresponds to 1270–1551 (RKKVEISVVK…THFSHHYENF (282 aa)).

The protein in the N-terminal section; belongs to the peroxidase family. As to quaternary structure, interacts with TXNDC11, TPO and CYBA. In terms of processing, N-glycosylated. Expressed in thyrocytes and tracheal surface epithelial cells (at protein level). Expressed in thyroid, trachea, bronchium, and to a lower extent, in placenta, testis, prostate, pancreas and heart.

The protein resides in the apical cell membrane. The enzyme catalyses NADH + O2 + H(+) = H2O2 + NAD(+). It carries out the reaction NADPH + O2 + H(+) = H2O2 + NADP(+). It functions in the pathway hormone biosynthesis; thyroid hormone biosynthesis. Its activity is regulated as follows. The NADPH oxidase activity is calcium-dependent. Peroxidase activity is inhibited by aminobenzohydrazide. Functionally, generates hydrogen peroxide which is required for the activity of thyroid peroxidase/TPO and lactoperoxidase/LPO. Plays a role in thyroid hormones synthesis and lactoperoxidase-mediated antimicrobial defense at the surface of mucosa. May have its own peroxidase activity through its N-terminal peroxidase-like domain. This is Dual oxidase 1 (DUOX1) from Homo sapiens (Human).